A 64-amino-acid polypeptide reads, in one-letter code: uncharacterized protein (64 aa).

In terms of tissue distribution, widely expressed; not found in breast.

This is an uncharacterized protein from Homo sapiens (Human).